The following is a 317-amino-acid chain: Cytochrome f (317 aa).

Positions 1-34 (MINFKKQIMKKTTFFLCAMLLVSSILIAPRSSLA) are cleaved as a signal peptide. Residues Y35, C55, C58, and H59 each coordinate heme. The chain crosses the membrane as a helical span at residues 284-304 (IIGLIAFFIGVGLTQILLVLK).

It belongs to the cytochrome f family. In terms of assembly, the 4 large subunits of the cytochrome b6-f complex are cytochrome b6, subunit IV (17 kDa polypeptide, PetD), cytochrome f and the Rieske protein, while the 4 small subunits are PetG, PetL, PetM and PetN. The complex functions as a dimer. Heme serves as cofactor.

Its subcellular location is the cellular thylakoid membrane. In terms of biological role, component of the cytochrome b6-f complex, which mediates electron transfer between photosystem II (PSII) and photosystem I (PSI), cyclic electron flow around PSI, and state transitions. The polypeptide is Cytochrome f (Prochlorococcus marinus (strain MIT 9515)).